The following is a 457-amino-acid chain: Multidrug resistance protein MdtK (457 aa).

The Cytoplasmic segment spans residues 1-15; that stretch reads MQKYTSEARQLLALR. A helical transmembrane segment spans residues 16 to 36; the sequence is IPVILAQVAQTAMGFVDTVMA. The Extracellular segment spans residues 37-52; that stretch reads GGYSATDMAAVAIGTS. The chain crosses the membrane as a helical span at residues 53 to 73; sequence IWLPAILFGHGLLLALTPVIA. Topologically, residues 74 to 92 are cytoplasmic; it reads QLNGSGRRERIAHQVRQGF. Residues 93–113 form a helical membrane-spanning segment; the sequence is WLAGFVSVLVMIVLWNAGYII. Topologically, residues 114–126 are extracellular; the sequence is RSMHNIDPALADK. A helical transmembrane segment spans residues 127-147; it reads AVGYLRALLWGAPGYLFFQVA. Residues 148–159 lie on the Cytoplasmic side of the membrane; it reads RNQCEGLAKTKP. The chain crosses the membrane as a helical span at residues 160–180; that stretch reads GMVMGFLGLLVNIPVNYIFIY. The Extracellular portion of the chain corresponds to 181-187; it reads GHFGMPE. The helical transmembrane segment at 188–208 threads the bilayer; the sequence is LGGIGCGVATAAVYWVMFIAM. The Cytoplasmic portion of the chain corresponds to 209 to 242; the sequence is LSYIKHARSMRDIRNEKGFGKPDSVVMKRLIQLG. A helical transmembrane segment spans residues 243 to 263; sequence LPIALALFFEVTLFAVVALLV. The Extracellular portion of the chain corresponds to 264 to 275; that stretch reads SPLGIVDVAGHQ. Residues 276–296 traverse the membrane as a helical segment; that stretch reads IALNFSSLMFVLPMSLAAAVT. Topologically, residues 297 to 313 are cytoplasmic; that stretch reads IRVGYRLGQGSTLDAQT. The helical transmembrane segment at 314–334 threads the bilayer; sequence AARTGLGVGICMAVVTAIFTV. Residues 335–349 are Extracellular-facing; that stretch reads TLRKHIALLYNDNPE. The helical transmembrane segment at 350–370 threads the bilayer; that stretch reads VVALAAQLMLLAAVYQISDSI. At 371–386 the chain is on the cytoplasmic side; that stretch reads QVIGSGILRGYKDTRS. The chain crosses the membrane as a helical span at residues 387–407; it reads IFFITFTAYWVLGLPSGYILA. The Extracellular segment spans residues 408–417; that stretch reads LTDLVVDRMG. A helical transmembrane segment spans residues 418–438; sequence PAGFWMGFIIGLTSAAVLMML. The Cytoplasmic portion of the chain corresponds to 439–457; that stretch reads RMRYLQRQPSAIILQRAAR.

The protein belongs to the multi antimicrobial extrusion (MATE) (TC 2.A.66.1) family. MdtK subfamily.

The protein resides in the cell inner membrane. In terms of biological role, multidrug efflux pump that functions probably as a Na(+)/drug antiporter. In Salmonella typhimurium (strain LT2 / SGSC1412 / ATCC 700720), this protein is Multidrug resistance protein MdtK (mdtK).